Consider the following 508-residue polypeptide: MDPSEKKISVWICQEEKLVSGLSRRTTCSDVVRVLLEDGCRRRCRQRRGQRRGLTEDPSGQLELPEPPDENDEDDDDAMPPGMLCGPPQCYCIVEKWRGFERILPNKTRILRLWTAWGDEQENVRFVLVRSEASLPNAGPRSAEARVVLSRERPCLARGAPARPSLALTQEKQRRVVRKAFRKLAKLNRRRQQQPSSPCSSTSSSTASSCSSSARTHESASVERMETLVHLVLSQDHTIRQQVQRLRELDREIDRYEAKVHLDRMRRHGVNYVQDTYLVGAGIDLDGQTPEGEPEDATLEEKGTEPAAPLDSEAQAAALEELARRCDDLVRLQEERAQQEELLERLSAEIQEELNQRWMQRRNEELAAREESLEPDGGPDGELLLEQERVRTQLSTSLYIGLRLSTDLEAVKADLDYSQQQRDIKERELQGLLQSLHTFEQTVVHDGALGSSGPSREPQPQTCAEMWVDQARGLAKSCPGNDEDSDTGLSSMHSQDSDSVPPVCESLV.

One can recognise a Ras-associating domain in the interval 1–133 (MDPSEKKISV…VRFVLVRSEA (133 aa)). 2 disordered regions span residues 51–81 (RRGL…AMPP) and 186–221 (KLNR…ESAS). Residues 66–78 (EPPDENDEDDDDA) are compositionally biased toward acidic residues. The segment covering 195 to 214 (PSSPCSSTSSSTASSCSSSA) has biased composition (low complexity). 2 coiled-coil regions span residues 235 to 266 (QDHT…DRMR) and 319 to 358 (LEEL…NQRW). The tract at residues 473–508 (GLAKSCPGNDEDSDTGLSSMHSQDSDSVPPVCESLV) is disordered. The segment covering 487 to 498 (TGLSSMHSQDSD) has biased composition (polar residues).

Expressed in neural progenitor cells (at protein level).

The protein resides in the cytoplasm. The protein localises to the cytosol. Its subcellular location is the cytoskeleton. It localises to the microtubule organizing center. It is found in the centrosome. The protein resides in the spindle pole. In terms of biological role, plays an important role in regulating embryonic neurogenesis. This chain is Ras association domain-containing protein 10 (Rassf10), found in Mus musculus (Mouse).